Here is a 400-residue protein sequence, read N- to C-terminus: Phosphoglycerate kinase (400 aa).

Residues 22 to 24, arginine 38, 61 to 64, arginine 119, and arginine 152 contribute to the substrate site; these read DFN and HLGR. Residues lysine 205, glycine 296, glutamate 327, and 353–356 contribute to the ATP site; that span reads GGDT.

This sequence belongs to the phosphoglycerate kinase family. As to quaternary structure, monomer.

The protein resides in the cytoplasm. It catalyses the reaction (2R)-3-phosphoglycerate + ATP = (2R)-3-phospho-glyceroyl phosphate + ADP. The protein operates within carbohydrate degradation; glycolysis; pyruvate from D-glyceraldehyde 3-phosphate: step 2/5. This chain is Phosphoglycerate kinase, found in Campylobacter jejuni subsp. jejuni serotype O:6 (strain 81116 / NCTC 11828).